A 401-amino-acid chain; its full sequence is G2/mitotic-specific cyclin-B1 (401 aa).

It belongs to the cyclin family. Cyclin AB subfamily. As to quaternary structure, interacts with the CDK1 protein kinase to form a serine/threonine kinase holoenzyme complex also known as maturation promoting factor (MPF). The cyclin subunit imparts substrate specificity to the complex.

Essential for the control of the cell cycle at the G2/M (mitosis) transition. In Oryzias luzonensis (Luzon ricefish), this protein is G2/mitotic-specific cyclin-B1 (ccnb1).